A 971-amino-acid chain; its full sequence is Outer capsid protein VP2 (971 aa).

It belongs to the orbivirus VP2 family.

It is found in the virion. Its function is as follows. The VP2 protein is one of the two proteins (with VP5) which constitute the virus particle outer capsid. It is the major target of the host immunogenic response. The protein is Outer capsid protein VP2 (Segment-2) of Epizootic hemorrhagic disease virus 1 (EHDV-1).